A 201-amino-acid polypeptide reads, in one-letter code: Holliday junction branch migration complex subunit RuvA (201 aa).

The interval 1 to 63 (MIAYLSGVVR…EDAQLLFGFP (63 aa)) is domain I. The domain II stretch occupies residues 64–142 (DADHLKLFDL…EHLAAAASGA (79 aa)). Residues 143–150 (AGGKRPAR) form a flexible linker region. Residues 151-201 (VSSTAGHDAVDALLALGFREAQVRAAVAELLGADPEASADTLIRKALGRLR) are domain III.

The protein belongs to the RuvA family. Homotetramer. Forms an RuvA(8)-RuvB(12)-Holliday junction (HJ) complex. HJ DNA is sandwiched between 2 RuvA tetramers; dsDNA enters through RuvA and exits via RuvB. An RuvB hexamer assembles on each DNA strand where it exits the tetramer. Each RuvB hexamer is contacted by two RuvA subunits (via domain III) on 2 adjacent RuvB subunits; this complex drives branch migration. In the full resolvosome a probable DNA-RuvA(4)-RuvB(12)-RuvC(2) complex forms which resolves the HJ.

It is found in the cytoplasm. In terms of biological role, the RuvA-RuvB-RuvC complex processes Holliday junction (HJ) DNA during genetic recombination and DNA repair, while the RuvA-RuvB complex plays an important role in the rescue of blocked DNA replication forks via replication fork reversal (RFR). RuvA specifically binds to HJ cruciform DNA, conferring on it an open structure. The RuvB hexamer acts as an ATP-dependent pump, pulling dsDNA into and through the RuvAB complex. HJ branch migration allows RuvC to scan DNA until it finds its consensus sequence, where it cleaves and resolves the cruciform DNA. The chain is Holliday junction branch migration complex subunit RuvA from Deinococcus radiodurans (strain ATCC 13939 / DSM 20539 / JCM 16871 / CCUG 27074 / LMG 4051 / NBRC 15346 / NCIMB 9279 / VKM B-1422 / R1).